The sequence spans 303 residues: N-acetyl-D-glucosamine kinase (303 aa).

ATP contacts are provided by residues 4 to 11 (GFDIGGTK) and 133 to 140 (GVGGGLVL). Residues His157, Cys177, Cys179, and Cys184 each contribute to the Zn(2+) site.

It belongs to the ROK (NagC/XylR) family. NagK subfamily.

It carries out the reaction N-acetyl-D-glucosamine + ATP = N-acetyl-D-glucosamine 6-phosphate + ADP + H(+). The protein operates within cell wall biogenesis; peptidoglycan recycling. Functionally, catalyzes the phosphorylation of N-acetyl-D-glucosamine (GlcNAc) derived from cell-wall degradation, yielding GlcNAc-6-P. The protein is N-acetyl-D-glucosamine kinase of Salmonella dublin (strain CT_02021853).